We begin with the raw amino-acid sequence, 512 residues long: Ribose import ATP-binding protein RbsA 1 (512 aa).

ABC transporter domains follow at residues 8–244 and 254–502; these read FRME…IGRE and AHRG…LNIA. Residue 40–47 coordinates ATP; sequence GENGAGKS.

Belongs to the ABC transporter superfamily. Ribose importer (TC 3.A.1.2.1) family. The complex is composed of an ATP-binding protein (RbsA), two transmembrane proteins (RbsC) and a solute-binding protein (RbsB).

It is found in the cell inner membrane. It carries out the reaction D-ribose(out) + ATP + H2O = D-ribose(in) + ADP + phosphate + H(+). Part of the ABC transporter complex RbsABC involved in ribose import. Responsible for energy coupling to the transport system. In Rhizobium johnstonii (strain DSM 114642 / LMG 32736 / 3841) (Rhizobium leguminosarum bv. viciae), this protein is Ribose import ATP-binding protein RbsA 1.